The following is a 105-amino-acid chain: MTANRLVLTGTVCKALIRKVSPAGIPHCQFVIEHRSTQEEAGLKRQSWCRMPIIASGKALQTDTHSITVGSKVTVSGFISSHQARNGLFKLVLHAEQIELIDSGD.

The region spanning 1–102 is the SSB domain; that stretch reads MTANRLVLTG…LHAEQIELID (102 aa).

This sequence belongs to the PriB family. As to quaternary structure, homodimer. Interacts with PriA and DnaT. Component of the replication restart primosome. Primosome assembly occurs via a 'hand-off' mechanism. PriA binds to replication forks, subsequently PriB then DnaT bind; DnaT then displaces ssDNA to generate the helicase loading substrate.

Its function is as follows. Involved in the restart of stalled replication forks, which reloads the replicative helicase on sites other than the origin of replication; the PriA-PriB pathway is the major replication restart pathway. During primosome assembly it facilitates complex formation between PriA and DnaT on DNA; stabilizes PriA on DNA. Stimulates the DNA unwinding activity of PriA helicase. The chain is Replication restart protein PriB from Proteus mirabilis (strain HI4320).